A 549-amino-acid chain; its full sequence is Glucose-6-phosphate isomerase (549 aa).

Residue Glu-353 is the Proton donor of the active site. Residues His-384 and Lys-513 contribute to the active site.

The protein belongs to the GPI family.

It is found in the cytoplasm. The catalysed reaction is alpha-D-glucose 6-phosphate = beta-D-fructose 6-phosphate. The protein operates within carbohydrate biosynthesis; gluconeogenesis. Its pathway is carbohydrate degradation; glycolysis; D-glyceraldehyde 3-phosphate and glycerone phosphate from D-glucose: step 2/4. Catalyzes the reversible isomerization of glucose-6-phosphate to fructose-6-phosphate. This chain is Glucose-6-phosphate isomerase, found in Bartonella bacilliformis (strain ATCC 35685 / KC583 / Herrer 020/F12,63).